A 310-amino-acid chain; its full sequence is Methionyl-tRNA formyltransferase (310 aa).

109–112 (SLLP) contacts (6S)-5,6,7,8-tetrahydrofolate.

This sequence belongs to the Fmt family.

It carries out the reaction L-methionyl-tRNA(fMet) + (6R)-10-formyltetrahydrofolate = N-formyl-L-methionyl-tRNA(fMet) + (6S)-5,6,7,8-tetrahydrofolate + H(+). Attaches a formyl group to the free amino group of methionyl-tRNA(fMet). The formyl group appears to play a dual role in the initiator identity of N-formylmethionyl-tRNA by promoting its recognition by IF2 and preventing the misappropriation of this tRNA by the elongation apparatus. The chain is Methionyl-tRNA formyltransferase from Staphylococcus epidermidis (strain ATCC 12228 / FDA PCI 1200).